Reading from the N-terminus, the 452-residue chain is Friend leukemia integration 1 transcription factor (452 aa).

Phosphoserine is present on serine 39. The region spanning 112–198 (PPPPNMTTNE…SHLTYLRESS (87 aa)) is the PNT domain. Polar residues predominate over residues 202–214 (YNTTSHTDPSSRL). Residues 202 to 272 (YNTTSHTDPS…YQILGPTSSR (71 aa)) are disordered. Residues 215-226 (NVKEDPSYDSVR) show a composition bias toward basic and acidic residues. A compositionally biased stretch (polar residues) spans 248-257 (QTMSKNTEQR). The ETS DNA-binding region spans 281–361 (IQLWQFLLEL…HGKRYAYKFD (81 aa)).

This sequence belongs to the ETS family. Can form homodimers or heterodimers with ETV6/TEL1.

Its subcellular location is the nucleus. Functionally, sequence-specific transcriptional activator. Recognizes the DNA sequence 5'-C[CA]GGAAGT-3'. The sequence is that of Friend leukemia integration 1 transcription factor (FLI1) from Bos taurus (Bovine).